The chain runs to 183 residues: UPF0398 protein MCCL_1095 (183 aa).

This sequence belongs to the UPF0398 family.

The protein is UPF0398 protein MCCL_1095 of Macrococcus caseolyticus (strain JCSC5402) (Macrococcoides caseolyticum).